The primary structure comprises 534 residues: CTP synthase (534 aa).

The segment at 1–267 (MTKYIFVTGG…DQIVCDHLKL (267 aa)) is amidoligase domain. Ser-13 contacts CTP. A UTP-binding site is contributed by Ser-13. 14–19 (SIGKGI) serves as a coordination point for ATP. Tyr-54 provides a ligand contact to L-glutamine. Asp-71 lines the ATP pocket. 2 residues coordinate Mg(2+): Asp-71 and Glu-141. CTP contacts are provided by residues 148–150 (DIE), 188–193 (KTKPTQ), and Lys-224. Residues 188-193 (KTKPTQ) and Lys-224 contribute to the UTP site. An ATP-binding site is contributed by 240–242 (RDV). The Glutamine amidotransferase type-1 domain maps to 292–534 (KIALVGKYVE…FVTAAIKNSN (243 aa)). An L-glutamine-binding site is contributed by Gly-354. Cys-381 acts as the Nucleophile; for glutamine hydrolysis in catalysis. Residues 382–385 (LGMQ), Glu-405, and Arg-463 contribute to the L-glutamine site. Catalysis depends on residues His-508 and Glu-510.

The protein belongs to the CTP synthase family. Homotetramer.

The catalysed reaction is UTP + L-glutamine + ATP + H2O = CTP + L-glutamate + ADP + phosphate + 2 H(+). The enzyme catalyses L-glutamine + H2O = L-glutamate + NH4(+). It catalyses the reaction UTP + NH4(+) + ATP = CTP + ADP + phosphate + 2 H(+). It participates in pyrimidine metabolism; CTP biosynthesis via de novo pathway; CTP from UDP: step 2/2. Allosterically activated by GTP, when glutamine is the substrate; GTP has no effect on the reaction when ammonia is the substrate. The allosteric effector GTP functions by stabilizing the protein conformation that binds the tetrahedral intermediate(s) formed during glutamine hydrolysis. Inhibited by the product CTP, via allosteric rather than competitive inhibition. Catalyzes the ATP-dependent amination of UTP to CTP with either L-glutamine or ammonia as the source of nitrogen. Regulates intracellular CTP levels through interactions with the four ribonucleotide triphosphates. This Streptococcus pyogenes serotype M1 protein is CTP synthase.